The sequence spans 379 residues: L-lactate dehydrogenase (379 aa).

In terms of domain architecture, FMN hydroxy acid dehydrogenase spans 1-379 (MIISASTDYR…IGRDSLVNLP (379 aa)). Tyr24 contributes to the substrate binding site. Residues Ser106 and Gln127 each contribute to the FMN site. Tyr129 provides a ligand contact to substrate. Residue Thr155 participates in FMN binding. Arg164 serves as a coordination point for substrate. Lys251 provides a ligand contact to FMN. Catalysis depends on His275, which acts as the Proton acceptor. Arg278 contributes to the substrate binding site. 306-330 (DSGIRTGLDVVRMLALGADTVLLGR) lines the FMN pocket.

This sequence belongs to the FMN-dependent alpha-hydroxy acid dehydrogenase family. FMN serves as cofactor.

It is found in the cell inner membrane. The catalysed reaction is (S)-lactate + A = pyruvate + AH2. Functionally, catalyzes the conversion of L-lactate to pyruvate. Is coupled to the respiratory chain. This is L-lactate dehydrogenase from Stenotrophomonas maltophilia (strain R551-3).